Consider the following 507-residue polypeptide: Polygalacturonase (507 aa).

A signal peptide spans 1 to 20; that stretch reads MSMKFMAALAFLALQLIVMA. Positions 21-54 are excised as a propeptide; that stretch reads AGEDQSAQIMLDSDTKQYHRSSRNLRKRVHHARH. 6 PbH1 repeats span residues 215–241, 242–263, 265–285, 295–316, 324–345, and 358–385; these read CDGV…DIFA, SKRF…AVGT, SSNI…SIGS, VSFV…RIKT, ASHI…LINQ, and RSAV…QLMC. The active-site Proton donor is the aspartate 256. Asparagine 267 carries an N-linked (GlcNAc...) asparagine glycan. Residue histidine 279 is part of the active site.

Belongs to the glycosyl hydrolase 28 family.

Its subcellular location is the secreted. The protein localises to the cell wall. The catalysed reaction is (1,4-alpha-D-galacturonosyl)n+m + H2O = (1,4-alpha-D-galacturonosyl)n + (1,4-alpha-D-galacturonosyl)m.. This is Polygalacturonase (JNA2) from Juniperus ashei (Ozark white cedar).